The primary structure comprises 382 residues: Transforming growth factor beta-1 proprotein (382 aa).

The signal sequence occupies residues 1-20; sequence MRAVCLMLTALLMLEYVCRS. The interval 23-68 is straightjacket domain; the sequence is MSTCKSLDLELVKRKRIEAIRGQILSKLRLPKEPEIDQEGDTEEVP. The interval 69-264 is arm domain; that stretch reads ASLMSIYNST…SLPVERHSQL (196 aa). N-linked (GlcNAc...) asparagine glycans are attached at residues N76, N116, and N125. Residues 218–243 form a bowtie tail region; it reads GKPMEEFRFKISGMNKLRGNTETLAM. The Cell attachment site motif lies at 235–237; it reads RGN. 4 cysteine pairs are disulfide-bonded: C278–C286, C285–C348, C314–C379, and C318–C381.

This sequence belongs to the TGF-beta family. Latency-associated peptide: Homodimer; disulfide-linked. Latency-associated peptide: Interacts with Transforming growth factor beta-1 (TGF-beta-1) chain; interaction is non-covalent and maintains (TGF-beta-1) in a latent state; each Latency-associated peptide (LAP) monomer interacts with TGF-beta-1 in the other monomer. Transforming growth factor beta-1: Homodimer; disulfide-linked. Transforming growth factor beta-1: Interacts with TGF-beta receptors (tgfbr1 and tgfbr2), leading to signal transduction. Interacts with EFEMP2. In terms of processing, transforming growth factor beta-1 proprotein: The precursor proprotein is cleaved in the Golgi apparatus to form Transforming growth factor beta-1 (TGF-beta-1) and Latency-associated peptide (LAP) chains, which remain non-covalently linked, rendering TGF-beta-1 inactive. In terms of tissue distribution, expressed in blood leukocytes, kidney macrophages, brain, gill and spleen but not in liver.

Its subcellular location is the secreted. It is found in the extracellular space. The protein localises to the extracellular matrix. Its function is as follows. Transforming growth factor beta-1 proprotein: Precursor of the Latency-associated peptide (LAP) and Transforming growth factor beta-1 (TGF-beta-1) chains, which constitute the regulatory and active subunit of TGF-beta-1, respectively. In terms of biological role, required to maintain the Transforming growth factor beta-1 (TGF-beta-1) chain in a latent state during storage in extracellular matrix. Associates non-covalently with TGF-beta-1 and regulates its activation via interaction with 'milieu molecules', such as LTBP1, LRRC32/GARP and LRRC33/NRROS, that control activation of TGF-beta-1. Interaction with integrins (ITGAV:ITGB6 or ITGAV:ITGB8) results in distortion of the Latency-associated peptide chain and subsequent release of the active TGF-beta-1. Transforming growth factor beta-1: Multifunctional protein that regulates the growth and differentiation of various cell types and is involved in various processes, such as normal development, immune function, microglia function and responses to neurodegeneration. Activation into mature form follows different steps: following cleavage of the proprotein in the Golgi apparatus, Latency-associated peptide (LAP) and Transforming growth factor beta-1 (TGF-beta-1) chains remain non-covalently linked rendering TGF-beta-1 inactive during storage in extracellular matrix. At the same time, LAP chain interacts with 'milieu molecules', such as ltbp1, lrrc32/garp and lrrc33/nrros that control activation of TGF-beta-1 and maintain it in a latent state during storage in extracellular milieus. TGF-beta-1 is released from LAP by integrins (ITGAV:ITGB6 or ITGAV:ITGB8): integrin-binding to LAP stabilizes an alternative conformation of the LAP bowtie tail and results in distortion of the LAP chain and subsequent release of the active TGF-beta-1. Once activated following release of LAP, TGF-beta-1 acts by binding to TGF-beta receptors (tgfbr1 and tgfbr2), which transduce signal. While expressed by many cells types, TGF-beta-1 only has a very localized range of action within cell environment thanks to fine regulation of its activation by Latency-associated peptide chain (LAP) and 'milieu molecules'. Plays an important role in bone remodeling: acts as a potent stimulator of osteoblastic bone formation. Can promote either T-helper 17 cells (Th17) or regulatory T-cells (Treg) lineage differentiation in a concentration-dependent manner. Can induce epithelial-to-mesenchymal transition (EMT) and cell migration in various cell types. The chain is Transforming growth factor beta-1 proprotein (tgfb1) from Oncorhynchus mykiss (Rainbow trout).